A 428-amino-acid polypeptide reads, in one-letter code: Isocitrate lyase 1 (428 aa).

91–93 (SGW) lines the substrate pocket. Asp153 is a binding site for Mg(2+). The active-site Proton acceptor is the Cys191. Substrate is bound by residues 192 to 193 (GH), Arg228, 313 to 317 (NCSPS), and Thr347.

The protein belongs to the isocitrate lyase/PEP mutase superfamily. Isocitrate lyase family. As to quaternary structure, homotetramer. Mg(2+) is required as a cofactor.

The enzyme catalyses D-threo-isocitrate = glyoxylate + succinate. It catalyses the reaction (2S,3R)-3-hydroxybutane-1,2,3-tricarboxylate = pyruvate + succinate. It participates in carbohydrate metabolism; glyoxylate cycle; (S)-malate from isocitrate: step 1/2. In terms of biological role, involved in the persistence and virulence of M.tuberculosis. Catalyzes the reversible formation of succinate and glyoxylate from isocitrate, a key step of the glyoxylate cycle, which operates as an anaplerotic route for replenishing the tricarboxylic acid cycle during growth on fatty acid substrates. It also catalyzes the formation of pyruvate and succinate from 2-methylisocitrate, a key step in the methylcitrate cycle (propionate degradation route). In Mycobacterium tuberculosis (strain ATCC 35801 / TMC 107 / Erdman), this protein is Isocitrate lyase 1 (icl1).